Reading from the N-terminus, the 241-residue chain is Tumor necrosis factor receptor superfamily member 18 (241 aa).

An N-terminal signal peptide occupies residues 1–25; the sequence is MAQHGAMGAFRALCGLALLCALSLG. Over 26–162 the chain is Extracellular; it reads QRPTGGPGCG…CVPGSPPAEP (137 aa). 5 disulfides stabilise this stretch: Cys-34/Cys-49, Cys-74/Cys-86, Cys-81/Cys-94, Cys-115/Cys-134, and Cys-128/Cys-153. TNFR-Cys repeat units follow at residues 34 to 72, 74 to 112, and 115 to 153; these read CGPG…EWDC, CVQP…GFQC, and CASG…NAVC. N-linked (GlcNAc...) asparagine glycosylation occurs at Asn-146. Residues 163–183 traverse the membrane as a helical segment; sequence LGWLTVVLLAVAACVLLLTSA. The Cytoplasmic portion of the chain corresponds to 184–241; that stretch reads QLGLHIWQLRSQCMWPRETQLLLEVPPSTEDARSCQFPEEERGERSAEEKGRLGDLWV. Residues 214–241 are disordered; the sequence is DARSCQFPEEERGERSAEEKGRLGDLWV. The span at 222–241 shows a compositional bias: basic and acidic residues; it reads EEERGERSAEEKGRLGDLWV.

In terms of assembly, binds to TRAF1, TRAF2, and TRAF3, but not TRAF5 and TRAF6. Binds through its C-terminus to SIVA1/SIVA. Expressed in lymph node, peripheral blood leukocytes and weakly in spleen.

Its subcellular location is the cell membrane. The protein localises to the secreted. Its function is as follows. Receptor for TNFSF18. Seems to be involved in interactions between activated T-lymphocytes and endothelial cells and in the regulation of T-cell receptor-mediated cell death. Mediated NF-kappa-B activation via the TRAF2/NIK pathway. The polypeptide is Tumor necrosis factor receptor superfamily member 18 (TNFRSF18) (Homo sapiens (Human)).